Reading from the N-terminus, the 344-residue chain is Serpentine receptor class delta-3 (344 aa).

Helical transmembrane passes span 21–41 (IIGY…IILI), 54–74 (MLHL…MLAL), 102–122 (FLHV…MISF), 142–162 (ICIL…SDVA), 203–223 (FSAI…IVFF), 259–279 (IVPI…FQVV), and 287–307 (MPFR…LYFV).

This sequence belongs to the nematode receptor-like protein srd family.

The protein resides in the membrane. The protein is Serpentine receptor class delta-3 (srd-3) of Caenorhabditis elegans.